We begin with the raw amino-acid sequence, 330 residues long: uncharacterized protein (330 aa).

10 helical membrane passes run 27-47 (MGAYVSLAAAMAIVGSSVVVG), 56-76 (VFLSSGLRFLIASVVLLMLLF), 90-110 (VFVLLVQSFTGVFLFSICLLY), 119-139 (ESGILTSTTPMLIGILSFFLL), 147-167 (TLIGILLAVCGVMAINLFGAG), 176-196 (LFGNMLIIAAVIGEALFTLMA), 206-226 (LAISTFVSLFGFLFFLPFALF), 243-263 (YVLYYALFVTVLAFYLWYSGV), 270-290 (VSGIFTSVLPVSAVILSGVIL), and 294-314 (FEFVHFIGIACVIGGIFVTVI). EamA domains follow at residues 38–163 (AIVG…AINL) and 187–314 (IGEA…VTVI).

It belongs to the EamA transporter family.

It localises to the cell membrane. This is an uncharacterized protein from Bacillus subtilis (strain 168).